Consider the following 276-residue polypeptide: NH(3)-dependent NAD(+) synthetase (276 aa).

43–50 (GISGGVDS) contributes to the ATP binding site. Position 49 (D49) interacts with Mg(2+). R146 is a binding site for deamido-NAD(+). T166 lines the ATP pocket. E171 serves as a coordination point for Mg(2+). The deamido-NAD(+) site is built by K179 and D186. 2 residues coordinate ATP: K195 and T217. 266–267 (HK) contacts deamido-NAD(+).

The protein belongs to the NAD synthetase family. Homodimer.

The enzyme catalyses deamido-NAD(+) + NH4(+) + ATP = AMP + diphosphate + NAD(+) + H(+). The protein operates within cofactor biosynthesis; NAD(+) biosynthesis; NAD(+) from deamido-NAD(+) (ammonia route): step 1/1. Functionally, catalyzes the ATP-dependent amidation of deamido-NAD to form NAD. Uses ammonia as a nitrogen source. The protein is NH(3)-dependent NAD(+) synthetase of Shewanella oneidensis (strain ATCC 700550 / JCM 31522 / CIP 106686 / LMG 19005 / NCIMB 14063 / MR-1).